Consider the following 100-residue polypeptide: Urease subunit gamma (100 aa).

This sequence belongs to the urease gamma subunit family. In terms of assembly, heterotrimer of UreA (gamma), UreB (beta) and UreC (alpha) subunits. Three heterotrimers associate to form the active enzyme.

It is found in the cytoplasm. The enzyme catalyses urea + 2 H2O + H(+) = hydrogencarbonate + 2 NH4(+). Its pathway is nitrogen metabolism; urea degradation; CO(2) and NH(3) from urea (urease route): step 1/1. This Mycobacteroides abscessus (strain ATCC 19977 / DSM 44196 / CCUG 20993 / CIP 104536 / JCM 13569 / NCTC 13031 / TMC 1543 / L948) (Mycobacterium abscessus) protein is Urease subunit gamma.